The primary structure comprises 129 residues: METQNAKAIARKISIAPRKARLVVDLIRGKNIAQAQAILTFTPKVAAPVILKLLNSAVSNAVNNLKLNREQLYVKEVFVNEGLRLKRMFPRAKGSGDMIKKRTSHITLVITSSTNLQTSKEEEQSGSKN.

It belongs to the universal ribosomal protein uL22 family. Part of the 50S ribosomal subunit.

Its function is as follows. This protein binds specifically to 23S rRNA; its binding is stimulated by other ribosomal proteins, e.g. L4, L17, and L20. It is important during the early stages of 50S assembly. It makes multiple contacts with different domains of the 23S rRNA in the assembled 50S subunit and ribosome. The globular domain of the protein is located near the polypeptide exit tunnel on the outside of the subunit, while an extended beta-hairpin is found that lines the wall of the exit tunnel in the center of the 70S ribosome. This chain is Large ribosomal subunit protein uL22, found in Onion yellows phytoplasma (strain OY-M).